The sequence spans 87 residues: Putative sodium channel toxin Ts40 (87 aa).

The signal sequence occupies residues methionine 1 to glutamine 19. Intrachain disulfides connect cysteine 41/cysteine 63, cysteine 47/cysteine 68, and cysteine 51/cysteine 70.

The protein belongs to the long (4 C-C) scorpion toxin superfamily. Sodium channel inhibitor family. As to expression, expressed by the venom gland.

The protein localises to the secreted. In terms of biological role, putative sodium channel toxin. This Tityus serrulatus (Brazilian scorpion) protein is Putative sodium channel toxin Ts40.